Here is a 109-residue protein sequence, read N- to C-terminus: RNA-binding protein Hfq (109 aa).

The 60-residue stretch at 9–68 (DPFLNALRKEKVSVSVYLVNGIKLQGQVEAFDQFCIVLRNTVNQMVYKHAISTIVPAKSV) folds into the Sm domain. The tract at residues 77–109 (PYHQNSNDEQDENVDDIHSDDLEIQENEGNIHE) is disordered.

This sequence belongs to the Hfq family. As to quaternary structure, homohexamer.

RNA chaperone that binds small regulatory RNA (sRNAs) and mRNAs to facilitate mRNA translational regulation in response to envelope stress, environmental stress and changes in metabolite concentrations. Also binds with high specificity to tRNAs. This chain is RNA-binding protein Hfq, found in Francisella tularensis subsp. tularensis (strain FSC 198).